The primary structure comprises 522 residues: Secreted RxLR effector protein 105 (522 aa).

The signal sequence occupies residues 1–21 (MRGPCSVITALLVVASSQIAA). The RxLR-dEER motif lies at 48 to 63 (RYLRGSQHVLDSNEER).

It belongs to the RxLR effector family.

The protein localises to the secreted. It localises to the host nucleus. The protein resides in the host cytoplasm. Secreted effector that dos not suppress the host cell death induced by cell death-inducing proteins. In Plasmopara viticola (Downy mildew of grapevine), this protein is Secreted RxLR effector protein 105.